The chain runs to 258 residues: MEVTQEELRHEILHTWEAAREAWVIHLEIAGINLSINKPVWFLWLGAAITFLFMYVGARTLRDRPGAYQVLVEELFRFGRDMFGGQINEEGRKWFPYSLTLFIFLLVLNIIGLFPNSYPVTSNISFTATLALFTFVLTQYEGVRRNGLVTYLKSWAPADLPAKPLMYPIMWFLHLIQEFTKPLTLALRLYANILAGHLIIFVFLSLILYFGLPTAFVSVPFAVVFYAFEIFVAVIQAYIFAILTQVYIELAMFAEEAH.

5 helical membrane passes run 38–58 (KPVW…YVGA), 94–114 (WFPY…IGLF), 118–138 (YPVT…FVLT), 193–213 (ILAG…FGLP), and 215–235 (AFVS…VAVI).

It belongs to the ATPase A chain family. In terms of assembly, F-type ATPases have 2 components, CF(1) - the catalytic core - and CF(0) - the membrane proton channel. CF(1) has five subunits: alpha(3), beta(3), gamma(1), delta(1), epsilon(1). CF(0) has three main subunits: a(1), b(2) and c(9-12). The alpha and beta chains form an alternating ring which encloses part of the gamma chain. CF(1) is attached to CF(0) by a central stalk formed by the gamma and epsilon chains, while a peripheral stalk is formed by the delta and b chains.

The protein resides in the cell membrane. Key component of the proton channel; it plays a direct role in the translocation of protons across the membrane. In Rubrobacter xylanophilus (strain DSM 9941 / JCM 11954 / NBRC 16129 / PRD-1), this protein is ATP synthase subunit a.